We begin with the raw amino-acid sequence, 280 residues long: Myelin proteolipid protein A (280 aa).

Residues 1–10 (MGWHDGCIRC) are Cytoplasmic-facing. S-palmitoyl cysteine attachment occurs at residues Cys7 and Cys10. Residues 11–36 (MVGVPFASVIATVLCFAGVALFCGCG) form a helical membrane-spanning segment. Residues 37–59 (HEALSGTEKLIETYFSKNYQEYE) are Extracellular-facing. The helical transmembrane segment at 60-88 (YLIHVINAFQYVIYGIAIFFFLFGILLLA) threads the bilayer. The Cytoplasmic segment spans residues 89 to 152 (EGFYTTTAIK…LGKWLGHPDK (64 aa)). Residues Cys140 and Cys142 are each lipidated (S-palmitoyl cysteine). A helical transmembrane segment spans residues 153 to 179 (FVGVTYIITILWILIFACSAVPVYIYF). Residues 180-239 (NTWVTCQSIAFPGKTTTSVSTLCSDARMYGVLPWNAFPGKVCGTSLLAICKTSEFQMTFH) lie on the Extracellular side of the membrane. 2 disulfides stabilise this stretch: Cys185–Cys229 and Cys202–Cys221. The chain crosses the membrane as a helical span at residues 240 to 269 (LFIAAFVGAAATLVALLTYMVGASFNYAVL). Topologically, residues 270-280 (RVTGRSDRSKF) are cytoplasmic.

It belongs to the myelin proteolipid protein family.

It is found in the cell membrane. Its function is as follows. This is the major myelin protein from the central nervous system. It plays an important role in the formation or maintenance of the multilamellar structure of myelin. In Xenopus laevis (African clawed frog), this protein is Myelin proteolipid protein A (plp1-a).